We begin with the raw amino-acid sequence, 143 residues long: Small ribosomal subunit protein uS12 (143 aa).

The segment covering 1–20 (MGKPRGLRTARKHRSHRRDQ) has biased composition (basic residues). The segment at 1 to 26 (MGKPRGLRTARKHRSHRRDQRWHDKD) is disordered. Residue Pro-62 is modified to Hydroxyproline.

It belongs to the universal ribosomal protein uS12 family. In terms of assembly, component of the 40S small ribosomal subunit.

The protein resides in the cytoplasm. It localises to the cytosol. It is found in the rough endoplasmic reticulum. This is Small ribosomal subunit protein uS12 (RpS23) from Dermacentor variabilis (American dog tick).